The following is a 294-amino-acid chain: Ribosomal RNA small subunit methyltransferase A (294 aa).

The S-adenosyl-L-methionine site is built by N33, L35, G60, E81, D106, and N131.

Belongs to the class I-like SAM-binding methyltransferase superfamily. rRNA adenine N(6)-methyltransferase family. RsmA subfamily.

It is found in the cytoplasm. The catalysed reaction is adenosine(1518)/adenosine(1519) in 16S rRNA + 4 S-adenosyl-L-methionine = N(6)-dimethyladenosine(1518)/N(6)-dimethyladenosine(1519) in 16S rRNA + 4 S-adenosyl-L-homocysteine + 4 H(+). In terms of biological role, specifically dimethylates two adjacent adenosines (A1518 and A1519) in the loop of a conserved hairpin near the 3'-end of 16S rRNA in the 30S particle. May play a critical role in biogenesis of 30S subunits. The polypeptide is Ribosomal RNA small subunit methyltransferase A (Lactococcus lactis subsp. lactis (strain IL1403) (Streptococcus lactis)).